We begin with the raw amino-acid sequence, 369 residues long: Protein disulfide-isomerase erp38 (369 aa).

An N-terminal signal peptide occupies residues 1–18 (MVLLKSLVVASLAAAVAA). Thioredoxin domains lie at 19–130 (KSAV…EKTG) and 131–251 (VKAR…EKAG). Active-site nucleophile residues include Cys-50, Cys-53, Cys-170, and Cys-173. Cystine bridges form between Cys-50/Cys-53 and Cys-170/Cys-173. The Prevents secretion from ER motif lies at 366 to 369 (KEEL).

This sequence belongs to the protein disulfide isomerase family.

The protein localises to the endoplasmic reticulum lumen. It carries out the reaction Catalyzes the rearrangement of -S-S- bonds in proteins.. In Neurospora crassa (strain ATCC 24698 / 74-OR23-1A / CBS 708.71 / DSM 1257 / FGSC 987), this protein is Protein disulfide-isomerase erp38 (erp38).